Consider the following 215-residue polypeptide: MGRGKIEIKRIENSTNRQVTFSKRRAGILKKAREIGVLCDAEVGVVIFSSAGKLSDYCTPKTTSVFPPLSRILEKYQTNSGKILWDEKHKSLSAEIDRVKKENDNMQIELRHMKGEDLNSLQPKELIAIEEALNNGQANLRDKMMDHWRMHKRNEKMLEDEHKMLAFRVHQQEVELSGGIRELELGYHHDDRDFAASMPFTFRVQPSHPNLQQEK.

The MADS-box domain occupies 1–61 (MGRGKIEIKR…GKLSDYCTPK (61 aa)). Positions 89–175 (HKSLSAEIDR…AFRVHQQEVE (87 aa)) constitute a K-box domain.

As to quaternary structure, may interact with the K-box of MADS16. Highly expressed in lodicules, at intermediate levels in stamens, and weakly in carpels. Expressed in pollen.

The protein resides in the nucleus. Functionally, probable transcription factor involved in the development of floral organs. B-class protein required for normal development of lodicules and stamens (whorls 2 and 3). May function as a heterodimer with MADS16. This is MADS-box transcription factor 4 (MADS4) from Oryza sativa subsp. japonica (Rice).